Consider the following 244-residue polypeptide: Cobalt transport protein CbiM (244 aa).

An N-terminal signal peptide occupies residues 1–28 (MKLLKNKKVTFVALLAILAVLSTQSVSA). The next 6 helical transmembrane spans lie at 36 to 56 (LPLFWCIFWFAVFLPFFVVGL), 71 to 91 (TMLALSGAFIFILSSLKIPSV), 108 to 128 (FGPSVISVLGTICLLFQALLL), 135 to 155 (TLGANAFSMAVVGPFVGYFVY), 166 to 186 (PVSIFICAVIADLATYATTSI), and 208 to 228 (GVFLTTQIPIAIVEGLLTVVL).

It belongs to the CbiM family. As to quaternary structure, forms an energy-coupling factor (ECF) transporter complex composed of an ATP-binding protein (A component, CbiO), a transmembrane protein (T component, CbiQ) and 2 possible substrate-capture proteins (S components, CbiM and CbiN) of unknown stoichimetry.

The protein localises to the cell membrane. It participates in cofactor biosynthesis; adenosylcobalamin biosynthesis. Functionally, part of the energy-coupling factor (ECF) transporter complex CbiMNOQ involved in cobalt import. This is Cobalt transport protein CbiM from Streptococcus sanguinis (strain SK36).